A 402-amino-acid chain; its full sequence is MKRFISAWNRTSLIKRIAIGVVIGAILGLLIPKITVIGLLGDMFVGGLKAIAPLLVSALVANALSQTREGQQSNMKTVIVLYLFGTFAAALTAVISHYIFPISLKLGAASATKAAAPQGIGEVFKDLMLKMVDNPINALSQANYIGVLVWAVVFGFAMRTASEHTKELLHTLAEVTSQIVRWIINLAPFGILGLVFDTISKNGVGVLADYGVLILVLVGTMTFVALVINPIIAFVMMGKNPFPLVFRCLKDSGITAFFTRSSAANIPVNLQLCEDLGLNPDTYLVSIPLGSTINMAGAAVTINVLTLAAVTTLGIEVDFATAFILSVVSTISACGASGIAGGSLLLVPVACSLFGISNDLAMQVVGVGFIVGVIQDSCETALNSSTDVLFTAVAEKSRWKKS.

The next 8 helical transmembrane spans lie at 17–37 (IAIG…ITVI), 44–64 (FVGG…ANAL), 79–99 (IVLY…SHYI), 138–158 (ALSQ…GFAM), 179–199 (IVRW…FDTI), 212–232 (VLIL…NPII), 295–315 (MAGA…TLGI), and 336–356 (ASGI…LFGI).

This sequence belongs to the dicarboxylate/amino acid:cation symporter (DAACS) (TC 2.A.23) family.

The protein resides in the cell membrane. The catalysed reaction is L-serine(in) + Na(+)(in) = L-serine(out) + Na(+)(out). It catalyses the reaction L-threonine(in) + Na(+)(in) = L-threonine(out) + Na(+)(out). Functionally, involved in the import of serine and threonine into the cell, with the concomitant import of sodium (symport system). The polypeptide is Serine/threonine transporter SstT (Streptococcus thermophilus (strain ATCC BAA-491 / LMD-9)).